The primary structure comprises 150 residues: Large ribosomal subunit protein uL15 (150 aa).

Residues 12-43 are disordered; the sequence is AKKRKKRVGCGESSGHGKTSGRGHKGQKARAG. Residues 30–39 are compositionally biased toward basic residues; it reads TSGRGHKGQK.

Belongs to the universal ribosomal protein uL15 family. As to quaternary structure, part of the 50S ribosomal subunit.

In terms of biological role, binds to the 23S rRNA. This chain is Large ribosomal subunit protein uL15, found in Methylacidiphilum infernorum (isolate V4) (Methylokorus infernorum (strain V4)).